The chain runs to 64 residues: Copper-specific metallothionein-2 (64 aa).

Cu(+) contacts are provided by C3, C5, C9, C11, C16, C18, C22, C24, C27, C33, C40, C44, C50, C52, C56, and C58.

The protein belongs to the metallothionein superfamily. Type 2 family.

Its function is as follows. The metallothioneins are involved in the cellular sequestration of toxic metal ions and regulation of essential trace elements. This isoform binds exclusively copper. This chain is Copper-specific metallothionein-2, found in Callinectes sapidus (Blue crab).